A 105-amino-acid chain; its full sequence is Large ribosomal subunit protein bL21c (105 aa).

It belongs to the bacterial ribosomal protein bL21 family. As to quaternary structure, part of the 50S ribosomal subunit.

It is found in the plastid. It localises to the chloroplast. This protein binds to 23S rRNA. In Phaeodactylum tricornutum (strain CCAP 1055/1), this protein is Large ribosomal subunit protein bL21c.